Reading from the N-terminus, the 509-residue chain is L-arabinose isomerase (509 aa).

4 residues coordinate Mn(2+): Glu-313, Glu-340, His-357, and His-456.

Belongs to the arabinose isomerase family. Mn(2+) serves as cofactor.

It carries out the reaction beta-L-arabinopyranose = L-ribulose. Its pathway is carbohydrate degradation; L-arabinose degradation via L-ribulose; D-xylulose 5-phosphate from L-arabinose (bacterial route): step 1/3. In terms of biological role, catalyzes the conversion of L-arabinose to L-ribulose. In Bacteroides thetaiotaomicron (strain ATCC 29148 / DSM 2079 / JCM 5827 / CCUG 10774 / NCTC 10582 / VPI-5482 / E50), this protein is L-arabinose isomerase.